The primary structure comprises 798 residues: Protocadherin beta-14 (798 aa).

Positions 1-26 (MEIRGALDLRKRQVLIFLVLLGLSRA) are cleaved as a signal peptide. At 27–686 (GTESAHYSVA…APAQAQADSL (660 aa)) the chain is on the extracellular side. Cadherin domains are found at residues 35-133 (VAEE…SPTF), 138-242 (ILIK…APEF), 247-347 (YEVQ…PPEV), 352-451 (ITKR…APTF), and 456-561 (YTLF…SPFV). A disulfide bridge links C96 with C102. N169 carries N-linked (GlcNAc...) asparagine glycosylation. Residues N359, N418, N436, N487, and N567 are each glycosylated (N-linked (GlcNAc...) asparagine). One can recognise a Cadherin 6 domain in the interval 568–671 (GSAPCTELVP…LVDGFSQPYL (104 aa)). Residues 687–711 (TVYLVVALASVSSLFLFSVLLFVAV) form a helical membrane-spanning segment. At 712-798 (RLCRRSRAAS…FRNSFGLNIQ (87 aa)) the chain is on the cytoplasmic side.

The protein resides in the cell membrane. Potential calcium-dependent cell-adhesion protein. May be involved in the establishment and maintenance of specific neuronal connections in the brain. This is Protocadherin beta-14 (PCDHB14) from Homo sapiens (Human).